The following is a 394-amino-acid chain: 2-aminobenzenesulfonate 2,3-dioxygenase subunit alpha (394 aa).

The region spanning 43 to 154 (WKFVCHVSEI…TETYLGLVFV (112 aa)) is the Rieske domain. Residues Cys-85, His-87, Cys-105, and His-108 each coordinate [2Fe-2S] cluster. Residues His-209 and His-213 each coordinate Fe cation.

It belongs to the bacterial ring-hydroxylating dioxygenase alpha subunit family. As to quaternary structure, heterotetramer with a alpha2beta2 structure. It depends on [2Fe-2S] cluster as a cofactor. Fe cation is required as a cofactor.

The catalysed reaction is 2-aminobenzenesulfonate + NADH + O2 + 2 H(+) = 2,3-dihydroxybenzenesulfonate + NH4(+) + NAD(+). Its activity is regulated as follows. Inhibited by o-phenanthroline. Its function is as follows. Alpha subunit of the oxygenase component of the 2-aminobenzenesulfonate 2,3-dioxygenase system (deaminating) (ABSDOS). Can use 2-aminobenzenesulfonate (ABS), benzenesulfonate (BS), 4-toluenesulfonate (TS), 2-nitrobenzenesulfonate, 3- and 4-aminobenzenesulfonates, 4-chloro- and 4-hydroxybenzenesulfonates and pyridine-3-sulfonate as substrates. No desulfonation of ABS to aminocatechol or aminophenol detected. The chain is 2-aminobenzenesulfonate 2,3-dioxygenase subunit alpha from Alcaligenes sp.